A 479-amino-acid chain; its full sequence is Transcription factor CP2-like protein 1 (479 aa).

A Grh/CP2 DB domain is found at 43-280; the sequence is RLPPLQYVLC…PSPSYNGSPN (238 aa). 2 disordered regions span residues 219–245 and 271–301; these read KPKG…KEKY and PSPS…LPVG. Basic and acidic residues predominate over residues 221–245; sequence KGADRKQKTDREKMEKRTAQEKEKY. Residues 261-365 are SAM2-like domain; the sequence is PDVAYQVNSA…IRLFNAIKGR (105 aa). Polar residues predominate over residues 271-281; that stretch reads PSPSYNGSPNS.

The protein belongs to the grh/CP2 family. CP2 subfamily. Forms homohexamers via its SAM-like domain. Interacts with MTA1; which is indispensable for TFCP2l1-mediated self-renewal-promoting effect and endoderm-inhibiting action. Highly expressed in placental JEG-3 cells and very low levels of expression in non-steroidogenic cells. No expression was seen in adrenal NCI-H295A cells or in adrenal tissue.

The protein localises to the nucleus. In terms of biological role, transcription factor that facilitates establishment and maintenance of pluripotency in embryonic stem cells (ESCs). With KLF2, acts as the major effector of self-renewal that mediates induction of pluripotency downstream of LIF/STAT3 and Wnt/beta-catenin signaling. Required for normal duct development in the salivary gland and kidney. Coordinates the development of the kidney collecting ducts intercalated (IC) and principal (PC) cells, which regulate acid-base and salt-water homeostasis, respectively. Regulates the expression of IC genes including subunits B1 and D2 of the V-ATPase complex, OXGR1, CA12, SLC4A1, AQP6 and IC-specific transcription factor FOXI1. Also regulates the expression of JAG1 and subsequent notch signaling in the collecting duct. JAG1 initiates notch signaling in PCs but inhibits notch signaling in ICs. Acts as a transcriptional suppressor that may suppress UBP1-mediated transcriptional activation. Modulates the placental expression of CYP11A1. The protein is Transcription factor CP2-like protein 1 (TFCP2L1) of Homo sapiens (Human).